A 422-amino-acid polypeptide reads, in one-letter code: Elongation factor 1-alpha (422 aa).

A tr-type G domain is found at 5-221; it reads KPHQNLAVIG…NDLPEPQPPT (217 aa). Positions 14-21 are G1; the sequence is GHVDHGKS. A GTP-binding site is contributed by 14-21; that stretch reads GHVDHGKS. Serine 21 lines the Mg(2+) pocket. Positions 70–74 are G2; it reads GVTID. Residues 91 to 94 form a G3 region; the sequence is DCPG. Residues 91–95 and 146–149 contribute to the GTP site; these read DCPGH and NKMD. The G4 stretch occupies residues 146–149; the sequence is NKMD. Residues 185–187 are G5; that stretch reads SAF.

It belongs to the TRAFAC class translation factor GTPase superfamily. Classic translation factor GTPase family. EF-Tu/EF-1A subfamily.

The protein localises to the cytoplasm. It carries out the reaction GTP + H2O = GDP + phosphate + H(+). Its function is as follows. GTP hydrolase that promotes the GTP-dependent binding of aminoacyl-tRNA to the A-site of ribosomes during protein biosynthesis. The sequence is that of Elongation factor 1-alpha from Natronomonas pharaonis (strain ATCC 35678 / DSM 2160 / CIP 103997 / JCM 8858 / NBRC 14720 / NCIMB 2260 / Gabara) (Halobacterium pharaonis).